The sequence spans 615 residues: 1-deoxy-D-xylulose-5-phosphate synthase (615 aa).

Thiamine diphosphate contacts are provided by residues H72 and 113-115 (GHA). Position 144 (D144) interacts with Mg(2+). Thiamine diphosphate contacts are provided by residues 145-146 (GA), N173, Y281, and E360. N173 contributes to the Mg(2+) binding site.

Belongs to the transketolase family. DXPS subfamily. In terms of assembly, homodimer. Requires Mg(2+) as cofactor. Thiamine diphosphate serves as cofactor.

The catalysed reaction is D-glyceraldehyde 3-phosphate + pyruvate + H(+) = 1-deoxy-D-xylulose 5-phosphate + CO2. The protein operates within metabolic intermediate biosynthesis; 1-deoxy-D-xylulose 5-phosphate biosynthesis; 1-deoxy-D-xylulose 5-phosphate from D-glyceraldehyde 3-phosphate and pyruvate: step 1/1. Functionally, catalyzes the acyloin condensation reaction between C atoms 2 and 3 of pyruvate and glyceraldehyde 3-phosphate to yield 1-deoxy-D-xylulose-5-phosphate (DXP). The sequence is that of 1-deoxy-D-xylulose-5-phosphate synthase from Thermus thermophilus (strain ATCC BAA-163 / DSM 7039 / HB27).